The following is a 586-amino-acid chain: Exocyst complex component EXO70A3 (586 aa).

Residues asparagine 65 and asparagine 106 are each glycosylated (N-linked (GlcNAc...) asparagine). The segment at cysteine 119–aspartate 149 is disordered. The chain crosses the membrane as a helical span at residues phenylalanine 258–isoleucine 278. Residues asparagine 321 and asparagine 487 are each glycosylated (N-linked (GlcNAc...) asparagine).

The protein belongs to the EXO70 family. In terms of assembly, subunit of the exocyst complex. As to expression, confined to the outer layer of the columella cells in the root tips of young seedlings.

It is found in the membrane. Its function is as follows. Component of the exocyst complex involved in the docking of exocytic vesicles with fusion sites on the plasma membrane during regulated or polarized secretion. Involved in PIN4 exocytosis and gravitropic responses in columella cells. By monitoring PIN4 distribution in columella cells, modulates auxin repartition and subsequently regulates the root system architecture (RSA), thus being a component of the auxin-dependent root directional growth (ARD). The sequence is that of Exocyst complex component EXO70A3 from Arabidopsis thaliana (Mouse-ear cress).